An 85-amino-acid chain; its full sequence is Small ribosomal subunit protein bS20 (85 aa).

Disordered regions lie at residues 1 to 25 and 62 to 85; these read MANI…ASIK and ARKG…QVNA.

This sequence belongs to the bacterial ribosomal protein bS20 family.

Its function is as follows. Binds directly to 16S ribosomal RNA. The sequence is that of Small ribosomal subunit protein bS20 from Bacillus cereus (strain G9842).